Reading from the N-terminus, the 402-residue chain is Protein FAM53A (402 aa).

The residue at position 119 (serine 119) is a Phosphoserine. Positions 170 to 215 (LVPGLPRRPVSPAGPTSPLTPRPASASSGFVDGSEGSTSSGPPWLS) are disordered. The short motif at 273–281 (RRVRRKRRR) is the Nuclear localization signal element. Residues serine 306 and serine 309 each carry the phosphoserine modification. Polar residues predominate over residues 323-333 (TLVSSPCNSQG). A disordered region spans residues 323 to 402 (TLVSSPCNSQ…DLDLEQIENN (80 aa)). Low complexity predominate over residues 336–345 (GIITPSSSPR).

The protein belongs to the FAM53 family.

It localises to the nucleus. In terms of biological role, may play an important role in neural development; the dorsomedial roof of the third ventricle. In Mus musculus (Mouse), this protein is Protein FAM53A.